The sequence spans 1062 residues: Translation initiation factor IF-2 (1062 aa).

Residues 34–463 (SASSTVEAPV…RMGAMVPRGN (430 aa)) are disordered. The span at 76-121 (PTPPSRPGLAPRPGPRPVPGRPGPLGRPGPATPAPSPSPASPPLPA) shows a compositional bias: pro residues. Positions 122-153 (SPVQASPVQASPVQASPTSAPAAPRPAAASAV) are enriched in low complexity. Residues 154-178 (PAPPMPSVPSAPSGPRPGPNAPRPG) are compositionally biased toward pro residues. Residues 198–214 (TAGGPTAGGPTAGGPTA) are compositionally biased toward gly residues. The span at 294–305 (RPTPGGMPPRPG) shows a compositional bias: pro residues. 2 stretches are compositionally biased toward gly residues: residues 307–324 (PRSG…GTGG) and 344–430 (PGGG…GGRG). The span at 431–442 (RPGRQRKSKRAK) shows a compositional bias: basic residues. One can recognise a tr-type G domain in the interval 555 to 727 (SRPPVVTVMG…IVLTADASLD (173 aa)). The interval 564 to 571 (GHVDHGKT) is G1. 564–571 (GHVDHGKT) contributes to the GTP binding site. Residues 589–593 (GITQH) are G2. The tract at residues 614 to 617 (DTPG) is G3. GTP-binding positions include 614–618 (DTPGH) and 668–671 (NKVD). The interval 668-671 (NKVD) is G4. The G5 stretch occupies residues 704 to 706 (SAR).

This sequence belongs to the TRAFAC class translation factor GTPase superfamily. Classic translation factor GTPase family. IF-2 subfamily.

It localises to the cytoplasm. One of the essential components for the initiation of protein synthesis. Protects formylmethionyl-tRNA from spontaneous hydrolysis and promotes its binding to the 30S ribosomal subunits. Also involved in the hydrolysis of GTP during the formation of the 70S ribosomal complex. This Frankia casuarinae (strain DSM 45818 / CECT 9043 / HFP020203 / CcI3) protein is Translation initiation factor IF-2.